We begin with the raw amino-acid sequence, 213 residues long: MFPLSLVQPSHSPLCPCSQPALTLWPATRLIFGHLEDDILSMRNDMERRMQRVNEACRLLSKDTEMRRITDQNRQSRESEGTSPNSGKDGKDHFELTLNVRDFSPHELTVKTQGRRVIVTGKHERKSDTEDGNYFHEYREWKREAELPESVNPEQVVCSLSKNGHLHIQAPRLALPPAPETPIPISMDTAPRDAQELPPDAQTSNAEGDQKVD.

Residues 61–80 show a composition bias toward basic and acidic residues; it reads SKDTEMRRITDQNRQSRESE. Disordered regions lie at residues 61 to 93 and 174 to 213; these read SKDT…GKDH and ALPP…QKVD. Residues 76-188 form the sHSP domain; it reads SRESEGTSPN…PETPIPISMD (113 aa).

It belongs to the small heat shock protein (HSP20) family.

This is Heat shock protein 30C (hsp30c) from Xenopus laevis (African clawed frog).